The sequence spans 162 residues: Probable chemoreceptor glutamine deamidase CheD (162 aa).

The protein belongs to the CheD family.

The catalysed reaction is L-glutaminyl-[protein] + H2O = L-glutamyl-[protein] + NH4(+). Functionally, probably deamidates glutamine residues to glutamate on methyl-accepting chemotaxis receptors (MCPs), playing an important role in chemotaxis. The polypeptide is Probable chemoreceptor glutamine deamidase CheD (Pyrococcus horikoshii (strain ATCC 700860 / DSM 12428 / JCM 9974 / NBRC 100139 / OT-3)).